A 787-amino-acid chain; its full sequence is Integrin beta-6 (787 aa).

An N-terminal signal peptide occupies residues 1-21; sequence MGIELLCLFFLFLGRNDHVQG. In terms of domain architecture, PSI spans 22-71; sequence GCAMGGAETCEDCLLIGPQCAWCSQENFTHLSGVGERCDTPANLLAKGCQ. The Extracellular portion of the chain corresponds to 22 to 708; that stretch reads GCAMGGAETC…KDCPKPPNIP (687 aa). Intrachain disulfides connect Cys-23–Cys-41, Cys-31–Cys-454, Cys-34–Cys-59, Cys-44–Cys-70, Cys-197–Cys-204, Cys-252–Cys-293, Cys-394–Cys-406, Cys-426–Cys-452, Cys-456–Cys-476, Cys-467–Cys-479, Cys-481–Cys-490, Cys-492–Cys-519, Cys-502–Cys-517, Cys-511–Cys-522, Cys-524–Cys-537, Cys-539–Cys-560, Cys-544–Cys-558, Cys-552–Cys-563, and Cys-565–Cys-574. N-linked (GlcNAc...) asparagine glycans are attached at residues Asn-48 and Asn-97. The VWFA domain occupies 131-371; the sequence is YPVDLYYLMD…QLIISAYEEL (241 aa). Mg(2+)-binding residues include Asp-140, Ser-142, and Ser-144. The Ca(2+) site is built by Ser-144, Asp-147, Asp-148, and Glu-179. Ca(2+) contacts are provided by Asn-235, Asp-237, Pro-239, and Glu-240. Glu-240 contacts Mg(2+). N-linked (GlcNAc...) asparagine glycosylation is present at Asn-260. Residues Asp-271 and Lys-355 each coordinate Ca(2+). Asn-387 carries N-linked (GlcNAc...) asparagine glycosylation. N-linked (GlcNAc...) asparagine glycosylation is present at Asn-418. 4 I-EGF domains span residues 456-491, 492-538, 539-575, and 576-615; these read CQKE…HHCE, CGED…PYCQ, CDNF…EYCN, and CTTS…PACE. 2 N-linked (GlcNAc...) asparagine glycosylation sites follow: Asn-463 and Asn-471. An N-linked (GlcNAc...) asparagine glycan is attached at Asn-541. Asn-575 carries N-linked (GlcNAc...) asparagine glycosylation. Intrachain disulfides connect Cys-576–Cys-599, Cys-583–Cys-597, Cys-591–Cys-602, Cys-604–Cys-614, Cys-617–Cys-620, Cys-624–Cys-670, Cys-630–Cys-649, Cys-633–Cys-645, and Cys-678–Cys-701. Residues 709 to 729 form a helical membrane-spanning segment; the sequence is MIMLGVSLAILLIGVALLCIW. Residues 730–757 form an interaction with HAX1 region; it reads KLLVSFHDRKEVAKFEAERSKAKWQTGT. Residues 730 to 787 are Cytoplasmic-facing; the sequence is KLLVSFHDRKEVAKFEAERSKAKWQTGTNPLYRGSTSTFKNVTYKHKEKQKVDLSTDG.

This sequence belongs to the integrin beta chain family. In terms of assembly, heterodimer of an alpha and a beta subunit. Interacts with FLNB. Interacts with HAX1. ITGAV:ITGB6 interacts with FBN1. ITGAV:ITGB6 interacts with TGFB1.

Its subcellular location is the cell membrane. The protein localises to the cell junction. It localises to the focal adhesion. Its function is as follows. Integrin alpha-V:beta-6 (ITGAV:ITGB6) is a receptor for fibronectin and cytotactin. It recognizes the sequence R-G-D in its ligands. ITGAV:ITGB6 acts as a receptor for fibrillin-1 (FBN1) and mediates R-G-D-dependent cell adhesion to FBN1. Integrin alpha-V:beta-6 (ITGAV:ITGB6) mediates R-G-D-dependent release of transforming growth factor beta-1 (TGF-beta-1) from regulatory Latency-associated peptide (LAP), thereby playing a key role in TGF-beta-1 activation. The polypeptide is Integrin beta-6 (ITGB6) (Ovis aries (Sheep)).